The primary structure comprises 140 residues: Small ribosomal subunit protein uS12 (140 aa).

A 3-methylthioaspartic acid modification is found at Asp102.

It belongs to the universal ribosomal protein uS12 family. Part of the 30S ribosomal subunit. Contacts proteins S8 and S17. May interact with IF1 in the 30S initiation complex.

With S4 and S5 plays an important role in translational accuracy. Functionally, interacts with and stabilizes bases of the 16S rRNA that are involved in tRNA selection in the A site and with the mRNA backbone. Located at the interface of the 30S and 50S subunits, it traverses the body of the 30S subunit contacting proteins on the other side and probably holding the rRNA structure together. The combined cluster of proteins S8, S12 and S17 appears to hold together the shoulder and platform of the 30S subunit. This chain is Small ribosomal subunit protein uS12, found in Geobacillus sp. (strain WCH70).